We begin with the raw amino-acid sequence, 121 residues long: Large ribosomal subunit protein uL14 (121 aa).

It belongs to the universal ribosomal protein uL14 family. Part of the 50S ribosomal subunit. Forms a cluster with proteins L3 and L19. In the 70S ribosome, L14 and L19 interact and together make contacts with the 16S rRNA in bridges B5 and B8.

In terms of biological role, binds to 23S rRNA. Forms part of two intersubunit bridges in the 70S ribosome. The chain is Large ribosomal subunit protein uL14 from Synechococcus sp. (strain CC9605).